The primary structure comprises 130 residues: Iron-sulfur cluster insertion protein ErpA 2 (130 aa).

Iron-sulfur cluster contacts are provided by Cys58, Cys122, and Cys124.

The protein belongs to the HesB/IscA family. Homodimer. Requires iron-sulfur cluster as cofactor.

Required for insertion of 4Fe-4S clusters for at least IspG. This chain is Iron-sulfur cluster insertion protein ErpA 2, found in Methylococcus capsulatus (strain ATCC 33009 / NCIMB 11132 / Bath).